The following is a 528-amino-acid chain: Tyrosine--tRNA ligase, cytoplasmic (528 aa).

Position 1 is an N-acetylmethionine (methionine 1). Glycine 2 is modified (N-acetylglycine; in Tyrosine--tRNA ligase, cytoplasmic, N-terminally processed). Position 39 (tyrosine 39) interacts with L-tyrosine. Residue tyrosine 39 coordinates trans-resveratrol. Positions 44-52 (TTGKPHVAY) match the 'HIGH' region motif. 4 residues coordinate L-tyrosine: tyrosine 166, glutamine 170, aspartate 173, and glutamine 188. Residues glutamine 170 and aspartate 173 each coordinate trans-resveratrol. An N6-acetyllysine modification is found at lysine 197. Serine 205 is subject to Phosphoserine. Lysine 206 is subject to N6-acetyllysine. The short motif at 222 to 226 (KMSSS) is the 'KMSKS' region element. Positions 242–247 (KKKLKK) match the Nuclear localization signal motif. Positions 339 to 363 (AAYPDPSKQKPMAKGPAKNSEPEEV) are disordered. A tRNA-binding domain is found at 364–468 (IPSRLDIRVG…AGSAPGERVF (105 aa)). The residue at position 386 (serine 386) is a Phosphoserine. Lysine 474, lysine 482, and lysine 490 each carry N6-acetyllysine.

Belongs to the class-I aminoacyl-tRNA synthetase family. As to quaternary structure, homodimer. Interacts (when binding to resveratrol) with PARP1; interaction stimulates the poly-ADP-ribosyltransferase activity of PARP1.

The protein localises to the cytoplasm. Its subcellular location is the nucleus. The enzyme catalyses tRNA(Tyr) + L-tyrosine + ATP = L-tyrosyl-tRNA(Tyr) + AMP + diphosphate + H(+). With respect to regulation, resveratrol strongly inhibits the tyrosine--tRNA ligase activity. Tyrosine--tRNA ligase that catalyzes the attachment of tyrosine to tRNA(Tyr) in a two-step reaction: tyrosine is first activated by ATP to form Tyr-AMP and then transferred to the acceptor end of tRNA(Tyr). Also acts as a positive regulator of poly-ADP-ribosylation in the nucleus, independently of its tyrosine--tRNA ligase activity. Activity is switched upon resveratrol-binding: resveratrol strongly inhibits the tyrosine--tRNA ligase activity and promotes relocalization to the nucleus, where YARS1 specifically stimulates the poly-ADP-ribosyltransferase activity of PARP1. The polypeptide is Tyrosine--tRNA ligase, cytoplasmic (YARS1) (Pongo abelii (Sumatran orangutan)).